The chain runs to 1334 residues: Aldehyde oxidase 4 (1334 aa).

The 2Fe-2S ferredoxin-type domain occupies 6–93 (DELIFFVNGK…GAAVTTVEGV (88 aa)). [2Fe-2S] cluster-binding residues include cysteine 45, cysteine 50, cysteine 53, and cysteine 75. Glutamine 114 provides a ligand contact to Mo-molybdopterin. Residues cysteine 115, cysteine 118, cysteine 150, and cysteine 152 each contribute to the [2Fe-2S] cluster site. Cysteine 152 provides a ligand contact to Mo-molybdopterin. Residues 235–421 (FQGERTIWIM…LSVFIPYSGQ (187 aa)) enclose the FAD-binding PCMH-type domain. FAD is bound by residues 263–270 (LVMGNTAV), alanine 345, threonine 354, histidine 358, aspartate 367, and alanine 411. Mo-molybdopterin-binding positions include alanine 802, 802–803 (AF), leucine 1043, 1084–1087 (GSMG), glutamine 1199, and leucine 1263. Residue glutamate 1265 is the Proton acceptor; for azaheterocycle hydroxylase activity of the active site.

The protein belongs to the xanthine dehydrogenase family. In terms of assembly, homodimer. It depends on [2Fe-2S] cluster as a cofactor. The cofactor is FAD. Requires Mo-molybdopterin as cofactor.

The protein resides in the cytoplasm. The catalysed reaction is an aldehyde + O2 + H2O = a carboxylate + H2O2 + H(+). The enzyme catalyses retinal + O2 + H2O = retinoate + H2O2 + H(+). Its function is as follows. Aldehyde oxidase able to catalyze the oxidation of retinaldehyde into retinoate. Acts as a negative modulator of the epidermal trophism. May be able to oxidize a wide variety of aldehydes into their corresponding carboxylates and to hydroxylate azaheterocycles. In Rattus norvegicus (Rat), this protein is Aldehyde oxidase 4 (Aox4).